The sequence spans 89 residues: Dolichol-phosphate mannose synthase subunit 3 (89 aa).

Helical transmembrane passes span 7 to 27 (ILSLLVAISAFWIGLLQAAII) and 33 to 53 (WLLPIYFVVSLGCYGLLMVGV).

It belongs to the DPM3 family. Component of the dolichol-phosphate mannose (DPM) synthase complex composed of DPMS1, DPMS2 and DPMS3; in the complex interacts directly with DPMS1 and DPMS2.

The protein resides in the endoplasmic reticulum membrane. It functions in the pathway protein modification; protein glycosylation. Regulates the biosynthesis of dolichol phosphate-mannose. Regulatory subunit of the dolichol-phosphate mannose (DPM) synthase complex; essential for the ER localization and stable expression of DPMS1. The protein is Dolichol-phosphate mannose synthase subunit 3 of Arabidopsis thaliana (Mouse-ear cress).